The chain runs to 91 residues: Acylphosphatase (91 aa).

One can recognise an Acylphosphatase-like domain in the interval 3–91 (HIKVNVKGQV…TELTKFEVKY (89 aa)). Catalysis depends on residues Arg18 and Asn36.

Belongs to the acylphosphatase family.

It catalyses the reaction an acyl phosphate + H2O = a carboxylate + phosphate + H(+). The sequence is that of Acylphosphatase (acyP) from Oceanobacillus iheyensis (strain DSM 14371 / CIP 107618 / JCM 11309 / KCTC 3954 / HTE831).